The chain runs to 131 residues: Large ribosomal subunit protein bL12 (131 aa).

This sequence belongs to the bacterial ribosomal protein bL12 family. As to quaternary structure, homodimer. Part of the ribosomal stalk of the 50S ribosomal subunit. Forms a multimeric L10(L12)X complex, where L10 forms an elongated spine to which 2 to 4 L12 dimers bind in a sequential fashion. Binds GTP-bound translation factors.

Functionally, forms part of the ribosomal stalk which helps the ribosome interact with GTP-bound translation factors. Is thus essential for accurate translation. The sequence is that of Large ribosomal subunit protein bL12 from Prochlorococcus marinus (strain MIT 9312).